A 319-amino-acid polypeptide reads, in one-letter code: Methionyl-tRNA formyltransferase (319 aa).

A (6S)-5,6,7,8-tetrahydrofolate-binding site is contributed by 114–117 (SLLP).

Belongs to the Fmt family.

It catalyses the reaction L-methionyl-tRNA(fMet) + (6R)-10-formyltetrahydrofolate = N-formyl-L-methionyl-tRNA(fMet) + (6S)-5,6,7,8-tetrahydrofolate + H(+). Functionally, attaches a formyl group to the free amino group of methionyl-tRNA(fMet). The formyl group appears to play a dual role in the initiator identity of N-formylmethionyl-tRNA by promoting its recognition by IF2 and preventing the misappropriation of this tRNA by the elongation apparatus. This chain is Methionyl-tRNA formyltransferase, found in Acinetobacter baylyi (strain ATCC 33305 / BD413 / ADP1).